Here is a 352-residue protein sequence, read N- to C-terminus: MAIISSNIGDNDFSLRKKELRLVDSKIIPEEKRKNNLNLARPITFQEFIGQEKLKSSLRIAIDASIYRKEPLEHTLLYGQPGLGKTTLAFLIAKEMNTKCRIATAPAIERPRDIVGLLLGLKEGEVLFIDEIHRLNRLTEELLYSAMEDFRLDLTMGANRGARCRTINLPRFTLVGATTKLASISAPLRDRFGISQKIEFYTCDELKQIIDNFSRLISFNVDDEASSHLAKISRGTPRIALRLLRRVRDYAQVVKKTNVISVNLIKKALNSYQIDEKGLDYVDRQYLSFLNQNKNIPTGLDSIAAGLGDDSSMLEFVVEPYLIQIGFLTRTPRGRLLTALGKKYIDSKNDNF.

The interval 13–201 is large ATPase domain (RuvB-L); sequence FSLRKKELRL…FGISQKIEFY (189 aa). ATP contacts are provided by residues Arg41, Gly82, Lys85, Thr86, Thr87, 148-150, Arg191, Tyr201, and Arg238; that span reads EDF. Position 86 (Thr86) interacts with Mg(2+). The segment at 202-273 is small ATPAse domain (RuvB-S); sequence TCDELKQIID…LIKKALNSYQ (72 aa). The interval 276 to 352 is head domain (RuvB-H); that stretch reads EKGLDYVDRQ…KYIDSKNDNF (77 aa). Positions 330 and 335 each coordinate DNA.

Belongs to the RuvB family. Homohexamer. Forms an RuvA(8)-RuvB(12)-Holliday junction (HJ) complex. HJ DNA is sandwiched between 2 RuvA tetramers; dsDNA enters through RuvA and exits via RuvB. An RuvB hexamer assembles on each DNA strand where it exits the tetramer. Each RuvB hexamer is contacted by two RuvA subunits (via domain III) on 2 adjacent RuvB subunits; this complex drives branch migration. In the full resolvosome a probable DNA-RuvA(4)-RuvB(12)-RuvC(2) complex forms which resolves the HJ.

It is found in the cytoplasm. The catalysed reaction is ATP + H2O = ADP + phosphate + H(+). The RuvA-RuvB-RuvC complex processes Holliday junction (HJ) DNA during genetic recombination and DNA repair, while the RuvA-RuvB complex plays an important role in the rescue of blocked DNA replication forks via replication fork reversal (RFR). RuvA specifically binds to HJ cruciform DNA, conferring on it an open structure. The RuvB hexamer acts as an ATP-dependent pump, pulling dsDNA into and through the RuvAB complex. RuvB forms 2 homohexamers on either side of HJ DNA bound by 1 or 2 RuvA tetramers; 4 subunits per hexamer contact DNA at a time. Coordinated motions by a converter formed by DNA-disengaged RuvB subunits stimulates ATP hydrolysis and nucleotide exchange. Immobilization of the converter enables RuvB to convert the ATP-contained energy into a lever motion, pulling 2 nucleotides of DNA out of the RuvA tetramer per ATP hydrolyzed, thus driving DNA branch migration. The RuvB motors rotate together with the DNA substrate, which together with the progressing nucleotide cycle form the mechanistic basis for DNA recombination by continuous HJ branch migration. Branch migration allows RuvC to scan DNA until it finds its consensus sequence, where it cleaves and resolves cruciform DNA. The polypeptide is Holliday junction branch migration complex subunit RuvB (Prochlorococcus marinus (strain MIT 9312)).